Reading from the N-terminus, the 104-residue chain is Thioredoxin (104 aa).

In terms of domain architecture, Thioredoxin spans 2 to 104 (AIVKVTDADF…NLAEVLDKHL (103 aa)). C29 and C32 form a disulfide bridge.

Belongs to the thioredoxin family.

Functionally, component of the thioredoxin-thioredoxin reductase system. Participates in various redox reactions through the reversible oxidation of its active center dithiol to a disulfide and catalyzes dithiol-disulfide exchange reactions. The chain is Thioredoxin (trxA) from Staphylococcus aureus (strain N315).